The following is a 2136-amino-acid chain: Protein Ycf2 (2136 aa).

1404–1411 (GPIETGRS) serves as a coordination point for ATP.

This sequence belongs to the Ycf2 family.

The protein resides in the plastid. Its subcellular location is the chloroplast stroma. Probable ATPase of unknown function. Its presence in a non-photosynthetic plant (Epifagus virginiana) and experiments in tobacco indicate that it has an essential function which is probably not related to photosynthesis. The protein is Protein Ycf2 of Marchantia polymorpha (Common liverwort).